Reading from the N-terminus, the 356-residue chain is Uroporphyrinogen decarboxylase (356 aa).

Substrate-binding positions include Arg-23–Arg-27, Asp-72, Tyr-148, Ser-203, and His-321.

The protein belongs to the uroporphyrinogen decarboxylase family. As to quaternary structure, homodimer.

It localises to the cytoplasm. The enzyme catalyses uroporphyrinogen III + 4 H(+) = coproporphyrinogen III + 4 CO2. Its pathway is porphyrin-containing compound metabolism; protoporphyrin-IX biosynthesis; coproporphyrinogen-III from 5-aminolevulinate: step 4/4. Catalyzes the decarboxylation of four acetate groups of uroporphyrinogen-III to yield coproporphyrinogen-III. The protein is Uroporphyrinogen decarboxylase of Chloroflexus aggregans (strain MD-66 / DSM 9485).